The sequence spans 430 residues: Mannan endo-1,4-beta-mannosidase (430 aa).

E173 (proton donor) is an active-site residue. The active-site Nucleophile is the E269. 2 CBM10 domains span residues S357–A390 and S395–A424.

This sequence belongs to the glycosyl hydrolase 5 (cellulase A) family.

It carries out the reaction Random hydrolysis of (1-&gt;4)-beta-D-mannosidic linkages in mannans, galactomannans and glucomannans.. In terms of biological role, catalyzes the endo hydrolysis of beta-1,4-linked mannan, galactomannan and glucomannan. It is able to hydrolyze mannosidic linkages that are flanked by mannose or glucose. This is Mannan endo-1,4-beta-mannosidase from Cellvibrio japonicus (strain Ueda107) (Pseudomonas fluorescens subsp. cellulosa).